The sequence spans 600 residues: DDB1- and CUL4-associated factor 15 (600 aa).

Residues 1-30 form a disordered region; that stretch reads MAPSSKSERNSGAGSGGGGPGGAGGKRAAG. The span at 13-27 shows a compositional bias: gly residues; that stretch reads AGSGGGGPGGAGGKR. A Phosphoserine modification is found at Ser-50. Positions 193, 196, 211, and 214 each coordinate Zn(2+). Residues Phe-231 and 234 to 235 each bind E7820; that span reads AF. The span at 280 to 295 shows a compositional bias: pro residues; the sequence is PASPPEPQSPELPPAL. The segment at 280 to 316 is disordered; sequence PASPPEPQSPELPPALPSFCPEAAPARSSGSPEPSPA. A phosphoserine mark is found at Ser-310 and Ser-314.

Component of the DCX(DCAF15) complex, also named CLR4(DCAF15) complex, composed of DCAF15, DDB1, cullin-4 (CUL4A or CUL4B), DDA1 and RBX1.

It participates in protein modification; protein ubiquitination. Aryl sulfonamide anticancer drugs change the substrate specificity of DCAF15 by acting as a molecular glue that promotes binding between DCAF15 and weak affinity interactors, such as RBM39. Its function is as follows. Substrate-recognition component of the DCX(DCAF15) complex, a cullin-4-RING E3 ubiquitin-protein ligase complex that mediates ubiquitination and degradation of target proteins. The DCX(DCAF15) complex acts as a regulator of the natural killer (NK) cells effector functions, possibly by mediating ubiquitination and degradation of cohesin subunits SMC1A and SMC3. May play a role in the activation of antigen-presenting cells (APC) and their interaction with NK cells. In terms of biological role, binding of aryl sulfonamide anticancer drugs, such as indisulam (E7070) or E7820, change the substrate specificity of the DCX(DCAF15) complex, leading to promote ubiquitination and degradation of splicing factor RBM39. RBM39 degradation results in splicing defects and death in cancer cell lines. Aryl sulfonamide anticancer drugs change the substrate specificity of DCAF15 by acting as a molecular glue that promotes binding between DCAF15 and weak affinity interactor RBM39. Aryl sulfonamide anticancer drugs also promote ubiquitination and degradation of RBM23 and PRPF39. In Homo sapiens (Human), this protein is DDB1- and CUL4-associated factor 15.